A 492-amino-acid chain; its full sequence is N-succinylglutamate 5-semialdehyde dehydrogenase (492 aa).

220-225 (GSANTG) is an NAD(+) binding site. Active-site residues include glutamate 243 and cysteine 277.

Belongs to the aldehyde dehydrogenase family. AstD subfamily.

The catalysed reaction is N-succinyl-L-glutamate 5-semialdehyde + NAD(+) + H2O = N-succinyl-L-glutamate + NADH + 2 H(+). Its pathway is amino-acid degradation; L-arginine degradation via AST pathway; L-glutamate and succinate from L-arginine: step 4/5. Its function is as follows. Catalyzes the NAD-dependent reduction of succinylglutamate semialdehyde into succinylglutamate. The chain is N-succinylglutamate 5-semialdehyde dehydrogenase from Escherichia coli O139:H28 (strain E24377A / ETEC).